The following is a 1034-amino-acid chain: Glycine dehydrogenase (decarboxylating), mitochondrial (1034 aa).

The N-terminal 63 residues, 1 to 63, are a transit peptide targeting the mitochondrion; it reads MERARRLAML…LNGFGSQVRT (63 aa). At K770 the chain carries N6-(pyridoxal phosphate)lysine.

Belongs to the GcvP family. Homodimer. The glycine cleavage system is composed of four proteins: P, T, L and H. The cofactor is pyridoxal 5'-phosphate.

It is found in the mitochondrion. It carries out the reaction N(6)-[(R)-lipoyl]-L-lysyl-[glycine-cleavage complex H protein] + glycine + H(+) = N(6)-[(R)-S(8)-aminomethyldihydrolipoyl]-L-lysyl-[glycine-cleavage complex H protein] + CO2. Its function is as follows. The glycine cleavage system catalyzes the degradation of glycine. The P protein binds the alpha-amino group of glycine through its pyridoxal phosphate cofactor; CO(2) is released and the remaining methylamine moiety is then transferred to the lipoamide cofactor of the H protein. The protein is Glycine dehydrogenase (decarboxylating), mitochondrial (GDCSPA) of Flaveria trinervia (Clustered yellowtops).